Reading from the N-terminus, the 135-residue chain is Ribonuclease VapC9 (135 aa).

One can recognise a PINc domain in the interval 15 to 118 (VVDTNVLMYV…LKRKAKQRGI (104 aa)). Positions 17 and 88 each coordinate Mg(2+).

Belongs to the PINc/VapC protein family. In terms of assembly, dimer. Mg(2+) serves as cofactor.

Functionally, toxic component of a type II toxin-antitoxin (TA) system. An RNase. The polypeptide is Ribonuclease VapC9 (Archaeoglobus fulgidus (strain ATCC 49558 / DSM 4304 / JCM 9628 / NBRC 100126 / VC-16)).